A 399-amino-acid chain; its full sequence is Glutathione S-transferase LANCL1 (399 aa).

A2 bears the N-acetylalanine mark. K142 is modified (N6-acetyllysine). C276 is a binding site for Zn(2+). Glutathione is bound at residue K317. Zn(2+)-binding residues include C322 and H323. 364-367 contributes to the glutathione binding site; sequence RTPD.

The protein belongs to the LanC-like protein family. As to quaternary structure, interacts with the C-terminal of STOM. Interacts with the EPS8 SH3 domain. Interaction with EPS8 is inhibited by glutathione binding. (Microbial infection) Interacts with P.falciparum SBP1. In terms of tissue distribution, detected in erythrocytes, brain, kidney, testis, ovary, heart, lung, placenta and spleen (at protein level). Ubiquitous. Strongly expressed in brain, spinal cord, pituitary gland, kidney, heart, skeletal muscle, pancreas, ovary and testis.

The protein resides in the cytoplasm. Its subcellular location is the cell membrane. It catalyses the reaction RX + glutathione = an S-substituted glutathione + a halide anion + H(+). It carries out the reaction 1-chloro-2,4-dinitrobenzene + glutathione = 2,4-dinitrophenyl-S-glutathione + chloride + H(+). Its function is as follows. Functions as a glutathione transferase. Catalyzes conjugation of the glutathione (GSH) to artificial substrates 1-chloro-2,4-dinitrobenzene (CDNB) and p-nitrophenyl acetate. Mitigates neuronal oxidative stress during normal postnatal development and in response to oxidative stresses probably through GSH antioxidant defense mechanism. May play a role in EPS8 signaling. Binds glutathione. This is Glutathione S-transferase LANCL1 from Homo sapiens (Human).